The following is a 225-amino-acid chain: Protein-L-isoaspartate O-methyltransferase (225 aa).

The active site involves Ser-75.

This sequence belongs to the methyltransferase superfamily. L-isoaspartyl/D-aspartyl protein methyltransferase family.

It is found in the cytoplasm. The catalysed reaction is [protein]-L-isoaspartate + S-adenosyl-L-methionine = [protein]-L-isoaspartate alpha-methyl ester + S-adenosyl-L-homocysteine. Functionally, catalyzes the methyl esterification of L-isoaspartyl residues in peptides and proteins that result from spontaneous decomposition of normal L-aspartyl and L-asparaginyl residues. It plays a role in the repair and/or degradation of damaged proteins. The protein is Protein-L-isoaspartate O-methyltransferase of Xylella fastidiosa (strain 9a5c).